The following is a 156-amino-acid chain: Probable cyclic pyranopterin monophosphate synthase (156 aa).

109–110 (MD) is a binding site for substrate. Residue D124 is part of the active site.

The protein belongs to the MoaC family. As to quaternary structure, homohexamer; trimer of dimers.

The enzyme catalyses (8S)-3',8-cyclo-7,8-dihydroguanosine 5'-triphosphate = cyclic pyranopterin phosphate + diphosphate. The protein operates within cofactor biosynthesis; molybdopterin biosynthesis. Catalyzes the conversion of (8S)-3',8-cyclo-7,8-dihydroguanosine 5'-triphosphate to cyclic pyranopterin monophosphate (cPMP). This chain is Probable cyclic pyranopterin monophosphate synthase, found in Methanopyrus kandleri (strain AV19 / DSM 6324 / JCM 9639 / NBRC 100938).